A 432-amino-acid chain; its full sequence is Hexane cyclase pydB (432 aa).

The N-terminal stretch at 1 to 20 (MMHQSLGLGLVVFVAAPVVA) is a signal peptide. N-linked (GlcNAc...) asparagine glycosylation is found at Asn59, Asn78, Asn153, and Asn308.

This sequence belongs to the Diels-Alderase family.

The protein operates within mycotoxin biosynthesis. Its function is as follows. Hexane cyclase; part of the gene cluster that mediates the biosynthesis of pyrrocidines, fungal natural products containing a macrocyclic para-cyclophane connected to a decahydrofluorene ring system that show potent antibiotic activities toward Gram-negative bacteria. Within the pathway, pydB functions synergistically with pydE, pydX and pydZ to form the cyclophane. The pathway begins with the PKS-NRPS pydA which, with the help of the trans-enoyl reductase pydC, synthesizes the polyketide-tyrosyl acyl thioester product which can be reductively off-loaded by the terminal reductase (R) domain in pydA. The alpha/beta hydrolase pydG is then required to catalyze the subsequent Knoevenagel condensation that affords the 3-pyrrolin-2-one ring, whereas the four proteins pydB, pydE, pydX and pydZ then function synergistically to form the cyclophane. PydB and the membrane-bound pydX and pydZ are lipid-binding proteins that can sequester and mold the pdyG product into the inverse S-shape. Binding of the medium chain reductase pydE to the complex would trigger the cascade oxidative cyclization. PydY is involved the Diels-Alder cycloaddition that forms the decahydrofluorene core. Additional non-enzymatic hydroxylation yields pyrrocidine A2 which can be further reduced into pyrrocidine B by an endogenous reductase. The chain is Hexane cyclase pydB from Acremonium sp.